Consider the following 316-residue polypeptide: Thymidylate synthase (316 aa).

DUMP contacts are provided by residues Arg-23 and 178 to 179; that span reads RR. Cys-198 functions as the Nucleophile in the catalytic mechanism. DUMP is bound by residues 218 to 221, Asn-229, and 259 to 261; these read RSAD and HLY. Position 221 (Asp-221) interacts with (6R)-5,10-methylene-5,6,7,8-tetrahydrofolate. Ala-315 serves as a coordination point for (6R)-5,10-methylene-5,6,7,8-tetrahydrofolate.

The protein belongs to the thymidylate synthase family. Bacterial-type ThyA subfamily. In terms of assembly, homodimer.

The protein localises to the cytoplasm. It carries out the reaction dUMP + (6R)-5,10-methylene-5,6,7,8-tetrahydrofolate = 7,8-dihydrofolate + dTMP. Its pathway is pyrimidine metabolism; dTTP biosynthesis. Functionally, catalyzes the reductive methylation of 2'-deoxyuridine-5'-monophosphate (dUMP) to 2'-deoxythymidine-5'-monophosphate (dTMP) while utilizing 5,10-methylenetetrahydrofolate (mTHF) as the methyl donor and reductant in the reaction, yielding dihydrofolate (DHF) as a by-product. This enzymatic reaction provides an intracellular de novo source of dTMP, an essential precursor for DNA biosynthesis. The chain is Thymidylate synthase from Lacticaseibacillus paracasei (strain ATCC 334 / BCRC 17002 / CCUG 31169 / CIP 107868 / KCTC 3260 / NRRL B-441) (Lactobacillus paracasei).